The sequence spans 368 residues: UDP-N-acetylenolpyruvoylglucosamine reductase (368 aa).

The 168-residue stretch at 32-199 (IGGKPRSAVR…LAIELQLLTD (168 aa)) folds into the FAD-binding PCMH-type domain. The active site involves arginine 177. Catalysis depends on serine 257, which acts as the Proton donor. Glutamate 358 is an active-site residue.

It belongs to the MurB family. Requires FAD as cofactor.

The protein localises to the cytoplasm. The catalysed reaction is UDP-N-acetyl-alpha-D-muramate + NADP(+) = UDP-N-acetyl-3-O-(1-carboxyvinyl)-alpha-D-glucosamine + NADPH + H(+). It participates in cell wall biogenesis; peptidoglycan biosynthesis. Functionally, cell wall formation. In Corynebacterium glutamicum (strain R), this protein is UDP-N-acetylenolpyruvoylglucosamine reductase.